We begin with the raw amino-acid sequence, 365 residues long: MESKSSSLPLFFQKPSGTQLLGLLSVLLVGLAVLISHQPQLNPSNILPLWVPVLVSAIVAGIFGMWIVPLLRRLKTGQIIREEGPQAHLKKAGTPTMGGLIFLPVGLAAGVIFAGFDPEAIAVALVTLAYGVIGWVDDWQVLRLKSNKGISPRMKLILQIAIAVVFCIWLALTAPELTTITFFAGLSLPLGVFFWALAGFAMVAESNATNLTDGVDGLAGGTGAIAFLGVGALALPAHPGLSLLCACLSGACLGFIYHNRNPAKVFMGDTGSLALGGGLAAAGILSGNIWGLLIISGIFCIEAVSVIAQVTYYKATKDETGQGKRLLKMAPIHHHLELSGWPETQIVGAFYLINLGLVLLSFILT.

10 consecutive transmembrane segments (helical) span residues 15-35 (PSGTQLLGLLSVLLVGLAVLI), 51-71 (VPVLVSAIVAGIFGMWIVPLL), 96-116 (TMGGLIFLPVGLAAGVIFAGF), 121-141 (IAVALVTLAYGVIGWVDDWQV), 156-176 (LILQIAIAVVFCIWLALTAPE), 180-200 (ITFFAGLSLPLGVFFWALAGF), 217-237 (GLAGGTGAIAFLGVGALALPA), 238-258 (HPGLSLLCACLSGACLGFIYH), 279-299 (LAAAGILSGNIWGLLIISGIF), and 344-364 (TQIVGAFYLINLGLVLLSFIL).

This sequence belongs to the glycosyltransferase 4 family. MraY subfamily. Mg(2+) serves as cofactor.

It is found in the cell inner membrane. It catalyses the reaction UDP-N-acetyl-alpha-D-muramoyl-L-alanyl-gamma-D-glutamyl-meso-2,6-diaminopimeloyl-D-alanyl-D-alanine + di-trans,octa-cis-undecaprenyl phosphate = di-trans,octa-cis-undecaprenyl diphospho-N-acetyl-alpha-D-muramoyl-L-alanyl-D-glutamyl-meso-2,6-diaminopimeloyl-D-alanyl-D-alanine + UMP. It participates in cell wall biogenesis; peptidoglycan biosynthesis. Functionally, catalyzes the initial step of the lipid cycle reactions in the biosynthesis of the cell wall peptidoglycan: transfers peptidoglycan precursor phospho-MurNAc-pentapeptide from UDP-MurNAc-pentapeptide onto the lipid carrier undecaprenyl phosphate, yielding undecaprenyl-pyrophosphoryl-MurNAc-pentapeptide, known as lipid I. The polypeptide is Phospho-N-acetylmuramoyl-pentapeptide-transferase (Picosynechococcus sp. (strain ATCC 27264 / PCC 7002 / PR-6) (Agmenellum quadruplicatum)).